The following is a 63-amino-acid chain: Large ribosomal subunit protein uL29 (63 aa).

The protein belongs to the universal ribosomal protein uL29 family.

The polypeptide is Large ribosomal subunit protein uL29 (Hahella chejuensis (strain KCTC 2396)).